We begin with the raw amino-acid sequence, 446 residues long: 3',5'-cyclic-AMP phosphodiesterase 7B (446 aa).

In terms of domain architecture, PDEase spans 97–420 (LDEDYLGQAR…AQWKSLLSNQ (324 aa)). H173 acts as the Proton donor in catalysis. A divalent metal cation-binding residues include H177, H213, D214, and D323. Positions 422–446 (RRRGSGQDLAGPAPETLEQTEGATP) are disordered. A Phosphoserine modification is found at S426. T445 is subject to Phosphothreonine.

Belongs to the cyclic nucleotide phosphodiesterase family. PDE7 subfamily. A divalent metal cation is required as a cofactor. As to expression, highly expressed in brain.

It catalyses the reaction 3',5'-cyclic AMP + H2O = AMP + H(+). It participates in purine metabolism; 3',5'-cyclic AMP degradation; AMP from 3',5'-cyclic AMP: step 1/1. Its activity is regulated as follows. Inhibited by dipyridamole, IBMX and SCH 51866. Insensitive to zaprinast, rolipram, and milrinone. Functionally, hydrolyzes the second messenger cAMP, which is a key regulator of many important physiological processes. May be involved in the control of cAMP-mediated neural activity and cAMP metabolism in the brain. This chain is 3',5'-cyclic-AMP phosphodiesterase 7B, found in Mus musculus (Mouse).